Reading from the N-terminus, the 126-residue chain is Flagellar protein FliT (126 aa).

The required for homodimerization stretch occupies residues Met-1 to Thr-50. The interval Met-60–Lys-98 is fliD binding.

It belongs to the FliT family. As to quaternary structure, homodimer. Interacts with FliD and FlhC.

It is found in the cytoplasm. The protein resides in the cytosol. Dual-function protein that regulates the transcription of class 2 flagellar operons and that also acts as an export chaperone for the filament-capping protein FliD. As a transcriptional regulator, acts as an anti-FlhDC factor; it directly binds FlhC, thus inhibiting the binding of the FlhC/FlhD complex to class 2 promoters, resulting in decreased expression of class 2 flagellar operons. As a chaperone, effects FliD transition to the membrane by preventing its premature polymerization, and by directing it to the export apparatus. The protein is Flagellar protein FliT of Pectobacterium atrosepticum (strain SCRI 1043 / ATCC BAA-672) (Erwinia carotovora subsp. atroseptica).